The chain runs to 256 residues: Phosphoribosylaminoimidazole-succinocarboxamide synthase (256 aa).

The protein belongs to the SAICAR synthetase family.

It catalyses the reaction 5-amino-1-(5-phospho-D-ribosyl)imidazole-4-carboxylate + L-aspartate + ATP = (2S)-2-[5-amino-1-(5-phospho-beta-D-ribosyl)imidazole-4-carboxamido]succinate + ADP + phosphate + 2 H(+). It functions in the pathway purine metabolism; IMP biosynthesis via de novo pathway; 5-amino-1-(5-phospho-D-ribosyl)imidazole-4-carboxamide from 5-amino-1-(5-phospho-D-ribosyl)imidazole-4-carboxylate: step 1/2. The protein is Phosphoribosylaminoimidazole-succinocarboxamide synthase of Synechococcus sp. (strain JA-3-3Ab) (Cyanobacteria bacterium Yellowstone A-Prime).